The chain runs to 102 residues: NADH-quinone oxidoreductase subunit K 2 (102 aa).

Helical transmembrane passes span 1–21 (MIVPLLHILILAGILFVLGLV), 30–50 (IIMMLIGIEIMLNAAMLAFVG), and 65–85 (LMIMAMTSAEVSLALALVVYL).

The protein belongs to the complex I subunit 4L family. NDH-1 is composed of 14 different subunits. Subunits NuoA, H, J, K, L, M, N constitute the membrane sector of the complex.

The protein localises to the cell inner membrane. The enzyme catalyses a quinone + NADH + 5 H(+)(in) = a quinol + NAD(+) + 4 H(+)(out). Its function is as follows. NDH-1 shuttles electrons from NADH, via FMN and iron-sulfur (Fe-S) centers, to quinones in the respiratory chain. The immediate electron acceptor for the enzyme in this species is believed to be ubiquinone. Couples the redox reaction to proton translocation (for every two electrons transferred, four hydrogen ions are translocated across the cytoplasmic membrane), and thus conserves the redox energy in a proton gradient. This chain is NADH-quinone oxidoreductase subunit K 2, found in Geotalea daltonii (strain DSM 22248 / JCM 15807 / FRC-32) (Geobacter daltonii).